The following is a 601-amino-acid chain: MENSPDSPQPLELGVAAGRVSPPEGRRRGGREAEDGPAGRAVDSGGQGAAAAAARSSLGDPTSPSQLGCGAGSDLKDGASSSPAASEVPSRGQHKVTASPELAEAAAGRGSGPVGDTGTCRVEQAAEEPSSTGAPSSSCSEPSPPGDSPSLDSLESFSNLHSFPSSSEFNSEEGAETRVPEDVEEGAAGPPRAAPLCKEEEEDPAQVLAASKERFPGQSVYHIKWIQWKEENTPIITQNENGPCPLLAILNVLLLAWKVKLPPMMEIITAEQLMEYLGDYMLEAKPKEISEIQRVNYEQNMSDAMAILHKLQTGLDVNVRFTGVRVFEYTPECIVFDLLDIPLYHGWLVDPQIDDIVKAVGNCSYNQLVEKIISCKQSDNSQLVSEGFVAEQFLNNTATQLTYHGLCELTSTVQEGELCVFFRNNHFSTMTKYKGQLYLLVTDQGFLTEEKIVWESLHNVDGDGNFCDSEFHLRPPSDPETVYKGQQDQIDQDYLMALSLQQEQQSQEINWEQIPEGISDLELAKKLQEEEDRRASQYYQEQEQAQAVVTTTTPSTQAQQGQPAQASPSSIKQPGNSERKRKEPREKDKEKEKEKNSCVIL.

The tract at residues 1–205 (MENSPDSPQP…LCKEEEEDPA (205 aa)) is disordered. Positions 24–34 (EGRRRGGREAE) are enriched in basic and acidic residues. The residue at position 62 (T62) is a Phosphothreonine. S82 is subject to Phosphoserine. Composition is skewed to low complexity over residues 127–141 (EEPS…SCSE), 148–169 (SPSL…SSEF), and 186–195 (GAAGPPRAAP). The active-site Nucleophile is the C244. The Proton acceptor role is filled by H426. Residues 485 to 537 (GQQDQIDQDYLMALSLQQEQQSQEINWEQIPEGISDLELAKKLQEEEDRRASQ) are ubiquitin-binding domain (UBD). The interval 534–601 (RASQYYQEQE…EKEKNSCVIL (68 aa)) is disordered. Residues 536–570 (SQYYQEQEQAQAVVTTTTPSTQAQQGQPAQASPSS) are compositionally biased toward low complexity. Residues 577-601 (SERKRKEPREKDKEKEKEKNSCVIL) are compositionally biased toward basic and acidic residues.

Belongs to the MINDY deubiquitinase family. FAM63 subfamily.

It carries out the reaction Thiol-dependent hydrolysis of ester, thioester, amide, peptide and isopeptide bonds formed by the C-terminal Gly of ubiquitin (a 76-residue protein attached to proteins as an intracellular targeting signal).. Its function is as follows. Hydrolase that can remove 'Lys-48'-linked conjugated ubiquitin from proteins. Can also bind to polyubiquitin chains of different linkage types, including 'Lys-6', 'Lys-11', 'Lys-29', 'Lys-33' and 'Lys-63'. May play a regulatory role at the level of protein turnover. The protein is Ubiquitin carboxyl-terminal hydrolase MINDY-2 (Mindy2) of Mus musculus (Mouse).